The chain runs to 279 residues: Pantothenate synthetase (279 aa).

30 to 37 serves as a coordination point for ATP; the sequence is MGALHAGH. His-37 (proton donor) is an active-site residue. (R)-pantoate is bound at residue Gln-61. Residue Gln-61 coordinates beta-alanine. 147-150 contributes to the ATP binding site; sequence GEKD. Gln-153 provides a ligand contact to (R)-pantoate. ATP contacts are provided by residues Ala-176 and 184–187; that span reads LSSR.

The protein belongs to the pantothenate synthetase family. In terms of assembly, homodimer.

The protein resides in the cytoplasm. The catalysed reaction is (R)-pantoate + beta-alanine + ATP = (R)-pantothenate + AMP + diphosphate + H(+). Its pathway is cofactor biosynthesis; (R)-pantothenate biosynthesis; (R)-pantothenate from (R)-pantoate and beta-alanine: step 1/1. Functionally, catalyzes the condensation of pantoate with beta-alanine in an ATP-dependent reaction via a pantoyl-adenylate intermediate. This chain is Pantothenate synthetase, found in Sphingopyxis alaskensis (strain DSM 13593 / LMG 18877 / RB2256) (Sphingomonas alaskensis).